A 485-amino-acid chain; its full sequence is Membrane-bound lytic murein transglycosylase F (485 aa).

An N-terminal signal peptide occupies residues 1-29 (MFAHTALRQRCAKWLLATGLFLLLGACVE). The segment at 30 to 267 (KPSTLERVKE…RLKDRYYGHV (238 aa)) is non-LT domain. An LT domain region spans residues 268–485 (DVLGYVGAYT…DKPADKSSPM (218 aa)). Residue E314 is part of the active site. The tract at residues 465–485 (EGNLHVPGVNKDKPADKSSPM) is disordered. Over residues 474 to 485 (NKDKPADKSSPM) the composition is skewed to basic and acidic residues.

This sequence in the N-terminal section; belongs to the bacterial solute-binding protein 3 family. It in the C-terminal section; belongs to the transglycosylase Slt family.

The protein localises to the cell outer membrane. The enzyme catalyses Exolytic cleavage of the (1-&gt;4)-beta-glycosidic linkage between N-acetylmuramic acid (MurNAc) and N-acetylglucosamine (GlcNAc) residues in peptidoglycan, from either the reducing or the non-reducing ends of the peptidoglycan chains, with concomitant formation of a 1,6-anhydrobond in the MurNAc residue.. Its function is as follows. Murein-degrading enzyme that degrades murein glycan strands and insoluble, high-molecular weight murein sacculi, with the concomitant formation of a 1,6-anhydromuramoyl product. Lytic transglycosylases (LTs) play an integral role in the metabolism of the peptidoglycan (PG) sacculus. Their lytic action creates space within the PG sacculus to allow for its expansion as well as for the insertion of various structures such as secretion systems and flagella. The protein is Membrane-bound lytic murein transglycosylase F of Pseudomonas putida (strain ATCC 700007 / DSM 6899 / JCM 31910 / BCRC 17059 / LMG 24140 / F1).